A 401-amino-acid chain; its full sequence is MLPVNKDQVLLQNTVPPGCPPQVLSQFVNSPAPNLASLCPHPTLPSSHFPLPAPPQAYFFSSLTQTHSPGPHFSSDSNSDFVPPHSSSHPRSSSCFGQNYTYFGEKLPSPHSISPSNYQLCVSPPLTGSSSLSQLQHSSPHSCQSPSRLQDLQSPKITSPVPSSPSPRIQNNKQTWQWPQSGSIKSSRGAGVCVPSKVDPAEFKDSGTLTQALVDHVGRRRIARDLQIQFLQRLWLGTPGHAPVVEYPICLVCLQIRTPSCPTPKYKTVPQLLAFPQLLPCVQGQESGPLRIGIGFGLRLPRGQARALHLLPPKNSTPVGVESQEEALQRQKSTIQESVQITGTLFQARSLRSIDLQSPKPSQCSRSLLQEPRQVAASPKAGPSVSKRSVTLGSILRKSPS.

A compositionally biased stretch (polar residues) spans Pro69–Asp80. Disordered regions lie at residues Pro69–Ser93, Ser129–Gly191, and Gln357–Ser401. Composition is skewed to low complexity over residues Pro83 to Ser93 and Ser129 to Ser147. Polar residues-rich tracts occupy residues Arg148–Ser186 and Gln357–Leu368.

This chain is Proline-rich protein 30 (Prr30), found in Mus musculus (Mouse).